The sequence spans 363 residues: Cysteine proteinase 15A (363 aa).

An N-terminal signal peptide occupies residues 1–18 (MDRRFLFALFLFAAVATA). A propeptide spans 19–131 (VTDDTNNDDF…QKAPILPTTN (113 aa)) (activation peptide). Disulfide bonds link cysteine 153–cysteine 203 and cysteine 187–cysteine 236. Residue cysteine 156 is part of the active site. Residue asparagine 249 is glycosylated (N-linked (GlcNAc...) asparagine). Residues cysteine 292 and cysteine 347 are joined by a disulfide bond. Active-site residues include histidine 299 and asparagine 326.

Belongs to the peptidase C1 family.

The polypeptide is Cysteine proteinase 15A (Pisum sativum (Garden pea)).